Reading from the N-terminus, the 90-residue chain is Serine protease inhibitor Cvsi-1 (90 aa).

The first 19 residues, 1–19, serve as a signal peptide directing secretion; it reads MDVVRTLILCVCLFGLTFA.

Post-translationally, contains 6 disulfide bonds. As to expression, detected in hemolymph (at protein level). In oysters collected in the summer the expression level is highest in the digestive gland with low levels of expression in gill, mantle, labial palp, style-sac midgut, gonad, heart, and hemocyte. In winter expression levels are higher in all tissues with highest expression levels observed in the digestive gland. Within the digestive gland expression is limited to the basophil cells of the digestive diverticula.

It is found in the secreted. Its function is as follows. Slow-binding inhibitor of serine proteases. The inhibitor rapidly binds to the protease forming a weak enzyme-inhibitor complex, and this is followed by a slow isomerization forming a tight-binding enzyme-inhibitor complex. Active against subtilisin A, perkinsin and trypsin with dissociation constants of 0.29 nM, 13.7 nM and 17.7 nM respectively. Not active against thermolysin, papain or pepsin. Has antiparasitic activity against the protozoan P.marinus. This Crassostrea virginica (Eastern oyster) protein is Serine protease inhibitor Cvsi-1.